Consider the following 123-residue polypeptide: Large ribosomal subunit protein eL8 (123 aa).

This sequence belongs to the eukaryotic ribosomal protein eL8 family. As to quaternary structure, part of the 50S ribosomal subunit. Probably part of the RNase P complex.

The protein resides in the cytoplasm. Its function is as follows. Multifunctional RNA-binding protein that recognizes the K-turn motif in ribosomal RNA, the RNA component of RNase P, box H/ACA, box C/D and box C'/D' sRNAs. The sequence is that of Large ribosomal subunit protein eL8 from Thermococcus kodakarensis (strain ATCC BAA-918 / JCM 12380 / KOD1) (Pyrococcus kodakaraensis (strain KOD1)).